We begin with the raw amino-acid sequence, 86 residues long: Large ribosomal subunit protein bL27 (86 aa).

The segment at 1 to 22 is disordered; that stretch reads MATKKAGGSSRNGRDSAGRRLG.

It belongs to the bacterial ribosomal protein bL27 family.

The protein is Large ribosomal subunit protein bL27 of Rickettsia peacockii (strain Rustic).